We begin with the raw amino-acid sequence, 185 residues long: Ribosome-recycling factor (185 aa).

The protein belongs to the RRF family.

Its subcellular location is the cytoplasm. Responsible for the release of ribosomes from messenger RNA at the termination of protein biosynthesis. May increase the efficiency of translation by recycling ribosomes from one round of translation to another. The polypeptide is Ribosome-recycling factor (Listeria innocua serovar 6a (strain ATCC BAA-680 / CLIP 11262)).